We begin with the raw amino-acid sequence, 303 residues long: Coenzyme PQQ synthesis protein B (303 aa).

The protein belongs to the PqqB family.

It participates in cofactor biosynthesis; pyrroloquinoline quinone biosynthesis. May be involved in the transport of PQQ or its precursor to the periplasm. This chain is Coenzyme PQQ synthesis protein B, found in Pseudomonas syringae pv. tomato (strain ATCC BAA-871 / DC3000).